A 105-amino-acid chain; its full sequence is Histone H2A-like 1 (105 aa).

This sequence belongs to the histone H2A family. As to quaternary structure, the nucleosome is a histone octamer containing two molecules each of H2A, H2B, H3 and H4 assembled in one H3-H4 heterotetramer and two H2A-H2B heterodimers. May be incorporated into a proportion of nucleosomes, replacing one or more H2A molecules. Interacts with H2BC1/TH2B; preferentially dimerizes with H2BC1/TH2B to form nucleosomes. As to expression, testis-specific.

The protein resides in the nucleus. It localises to the chromosome. Functionally, atypical histone H2A which can replace conventional H2A in some nucleosomes and may play a role during spermatogenesis. Nucleosomes wrap and compact DNA into chromatin, limiting DNA accessibility to the cellular machineries which require DNA as a template. Histones thereby play a central role in transcription regulation, DNA repair, DNA replication and chromosomal stability. DNA accessibility is regulated via a complex set of post-translational modifications of histones, also called histone code, and nucleosome remodeling. This is Histone H2A-like 1 from Mus musculus (Mouse).